A 287-amino-acid polypeptide reads, in one-letter code: Transcription cofactor vestigial-like protein 4 (287 aa).

Disordered regions lie at residues 44 to 68 (ASALSSHRTGPPPISPSKRKFSMEP) and 251 to 287 (AAKDSASSSPESASRRGQPASPTAHMVSHSHSPSVVS). Residues Ser58 and Ser271 each carry the phosphoserine modification. Residues 275–287 (HMVSHSHSPSVVS) are compositionally biased toward low complexity.

Belongs to the vestigial family. As to quaternary structure, interacts with TEFs. Interacts with IRF2BP2.

The protein localises to the nucleus. In terms of biological role, may act as a specific coactivator for the mammalian TEFs. The protein is Transcription cofactor vestigial-like protein 4 (Vgll4) of Mus musculus (Mouse).